Reading from the N-terminus, the 302-residue chain is Methylsterol monooxygenase erg25A (302 aa).

N-linked (GlcNAc...) asparagine glycosylation occurs at asparagine 5. Transmembrane regions (helical) follow at residues 47–67, 105–125, and 132–152; these read NIVA…IYFS, YILL…HPMM, and FTIP…FFLL. The Fatty acid hydroxylase domain occupies 147-283; sequence IIFFLLEDTY…FRHWDVLMGT (137 aa). The Histidine box-1 motif lies at 161 to 165; sequence HRAMH. A Histidine box-2 motif is present at residues 174–178; it reads HRIHH. The chain crosses the membrane as a helical span at residues 193-213; that stretch reads PWETLLLGLGTIGPPLLLALM. Residues 258–264 carry the Histidine box-3 motif; it reads WHDDHHR. A glycan (N-linked (GlcNAc...) asparagine) is linked at asparagine 269.

The protein belongs to the sterol desaturase family. Fe cation serves as cofactor.

It is found in the endoplasmic reticulum membrane. It functions in the pathway steroid metabolism; ergosterol biosynthesis. Its function is as follows. Sterol-C4-methyl oxidase; part of the third module of ergosterol biosynthesis pathway that includes the late steps of the pathway. Erg25A is a catalytic component of the C-4 demethylation complex that catalyzes the conversion of 4,4-dimethylfecosterol into fecosterol via 4-methylfecosterol. The third module or late pathway involves the ergosterol synthesis itself through consecutive reactions that mainly occur in the endoplasmic reticulum (ER) membrane. Firstly, the squalene synthase erg9 catalyzes the condensation of 2 farnesyl pyrophosphate moieties to form squalene, which is the precursor of all steroids. Squalene synthase is crucial for balancing the incorporation of farnesyl diphosphate (FPP) into sterol and nonsterol isoprene synthesis. Secondly, squalene is converted into lanosterol by the consecutive action of the squalene epoxidase erg1 and the lanosterol synthase erg7. Then, the delta(24)-sterol C-methyltransferase erg6 methylates lanosterol at C-24 to produce eburicol. Eburicol is the substrate of the sterol 14-alpha demethylase encoded by cyp51A and cyp51B, to yield 4,4,24-trimethyl ergosta-8,14,24(28)-trienol. The C-14 reductase erg24 then reduces the C14=C15 double bond which leads to 4,4-dimethylfecosterol. A sequence of further demethylations at C-4, involving the C-4 demethylation complex containing the C-4 methylsterol oxidases erg25A or erg25B, the sterol-4-alpha-carboxylate 3-dehydrogenase erg26 and the 3-keto-steroid reductase erg27, leads to the production of fecosterol via 4-methylfecosterol. The C-8 sterol isomerase erg2 then catalyzes the reaction which results in unsaturation at C-7 in the B ring of sterols and thus converts fecosterol to episterol. The sterol-C5-desaturase erg3B then catalyzes the introduction of a C-5 double bond in the B ring to produce 5-dehydroepisterol. The 2 other sterol-C5-desaturases, erg3A and erg3C, seem to be less important in ergosterol biosynthesis. The C-22 sterol desaturase erg5 further converts 5-dehydroepisterol into ergosta-5,7,22,24(28)-tetraen-3beta-ol by forming the C-22(23) double bond in the sterol side chain. Finally, ergosta-5,7,22,24(28)-tetraen-3beta-ol is substrate of the C-24(28) sterol reductases erg4A and erg4B to produce ergosterol. Possible alternative sterol biosynthetic pathways might exist from fecosterol to ergosterol, depending on the activities of the erg3 isoforms. This Aspergillus fumigatus (strain ATCC MYA-4609 / CBS 101355 / FGSC A1100 / Af293) (Neosartorya fumigata) protein is Methylsterol monooxygenase erg25A.